A 1050-amino-acid chain; its full sequence is Beta-galactosidase (1050 aa).

The substrate site is built by Asn100 and Asp199. Asp199 provides a ligand contact to Na(+). Glu422, His424, and Glu467 together coordinate Mg(2+). Residues Glu467 and 543-546 each bind substrate; that span reads EYAH. The Proton donor role is filled by Glu467. Catalysis depends on Glu543, which acts as the Nucleophile. Asn603 contacts Mg(2+). Residues Phe607 and Asn610 each contribute to the Na(+) site. Substrate-binding residues include Asn610 and Trp1025.

This sequence belongs to the glycosyl hydrolase 2 family. In terms of assembly, homotetramer. Requires Mg(2+) as cofactor. The cofactor is Na(+).

The catalysed reaction is Hydrolysis of terminal non-reducing beta-D-galactose residues in beta-D-galactosides.. The polypeptide is Beta-galactosidase (Yersinia pestis bv. Antiqua (strain Angola)).